The primary structure comprises 205 residues: Glycerol-3-phosphate acyltransferase 1 (205 aa).

A run of 5 helical transmembrane segments spans residues 7 to 27, 52 to 74, 78 to 100, 125 to 145, and 160 to 180; these read TLIGYVFGNFLTAMIVGKLFL, WGILTCLGDLLKSLIALFIVYFV, HINIAYAGLGLILGHCFPIWNHF, LLIALILTAIMQNLTIPPLVF, and AGIVFMVITLIMVYKFWQDII.

This sequence belongs to the PlsY family. Probably interacts with PlsX.

Its subcellular location is the cell membrane. The enzyme catalyses an acyl phosphate + sn-glycerol 3-phosphate = a 1-acyl-sn-glycero-3-phosphate + phosphate. It functions in the pathway lipid metabolism; phospholipid metabolism. In terms of biological role, catalyzes the transfer of an acyl group from acyl-phosphate (acyl-PO(4)) to glycerol-3-phosphate (G3P) to form lysophosphatidic acid (LPA). This enzyme utilizes acyl-phosphate as fatty acyl donor, but not acyl-CoA or acyl-ACP. This is Glycerol-3-phosphate acyltransferase 1 from Lactobacillus acidophilus (strain ATCC 700396 / NCK56 / N2 / NCFM).